A 74-amino-acid polypeptide reads, in one-letter code: Imcroporin (74 aa).

The N-terminal stretch at 1-22 is a signal peptide; that stretch reads MKFQYLLAVFLIVLVVTDHCQA. The residue at position 39 (lysine 39) is a Lysine amide; partial. The propeptide occupies 45-74; it reads QLEARFEPKQRNFRKRELDFEKLFANMPDY.

It belongs to the non-disulfide-bridged peptide (NDBP) superfamily. Short antimicrobial peptide (group 4) family. As to expression, expressed by the venom gland.

Its subcellular location is the secreted. The protein localises to the target cell membrane. Functionally, has potent antibacterial activity against Gram-positive bacteria M.luteus, B.thuringiensis, S.aureus and B.subtilis, but not Gram-negative bacteria. Shows a weak cytotoxicity effect against mammalian cell lines and relatively low hemolytic activity against human erythrocytes. This Isometrus maculatus (Lesser brown scorpion) protein is Imcroporin.